A 110-amino-acid chain; its full sequence is Cytochrome c6 (110 aa).

An N-terminal signal peptide occupies residues 1-25; the sequence is MKKLVSSVILALILFGFSWVSPAFA. The heme c site is built by C39, C42, H43, and M83.

This sequence belongs to the cytochrome c family. PetJ subfamily. In terms of assembly, monomer. In terms of processing, binds 1 heme c group covalently per subunit.

The protein localises to the cellular thylakoid lumen. Functionally, functions as an electron carrier between membrane-bound cytochrome b6-f and photosystem I in oxygenic photosynthesis. The sequence is that of Cytochrome c6 from Gloeothece citriformis (strain PCC 7424) (Cyanothece sp. (strain PCC 7424)).